A 240-amino-acid chain; its full sequence is MKFSIITLFPKIINSYIEESIIKRAINKQAIQIEIIDLRNFSTLNHNQVDDYQYGGGSGMVLMIEPLIKAIESVKTTKSIVLLTTPQGKTLNQSIVKTYSNNYEHIIIVCGHYEGYDERVLDYIDDEISIGDYVITGGELASLILVDSISRLLPNVIKQESYENESFENNLLDHPVYTKPYEFRNKKVPDVLLSGHHQNIKKWREEQQVIKTLKKRPDLIDITKLNKHQLEIYKKMKGEQ.

S-adenosyl-L-methionine contacts are provided by residues Gly111 and 130-135 (IGDYVI).

It belongs to the RNA methyltransferase TrmD family. In terms of assembly, homodimer.

Its subcellular location is the cytoplasm. It catalyses the reaction guanosine(37) in tRNA + S-adenosyl-L-methionine = N(1)-methylguanosine(37) in tRNA + S-adenosyl-L-homocysteine + H(+). In terms of biological role, specifically methylates guanosine-37 in various tRNAs. The chain is tRNA (guanine-N(1)-)-methyltransferase from Mycoplasma capricolum subsp. capricolum (strain California kid / ATCC 27343 / NCTC 10154).